Reading from the N-terminus, the 257-residue chain is Phosphate import ATP-binding protein PstB (257 aa).

An ABC transporter domain is found at 5–246; it reads LEIKDLTAFY…EVIFTSPKNE (242 aa). ATP is bound at residue 37–44; the sequence is GPSGCGKS.

The protein belongs to the ABC transporter superfamily. Phosphate importer (TC 3.A.1.7) family. The complex is composed of two ATP-binding proteins (PstB), two transmembrane proteins (PstC and PstA) and a solute-binding protein (PstS).

The protein resides in the cell membrane. It catalyses the reaction phosphate(out) + ATP + H2O = ADP + 2 phosphate(in) + H(+). Part of the ABC transporter complex PstSACB involved in phosphate import. Responsible for energy coupling to the transport system. This is Phosphate import ATP-binding protein PstB from Tropheryma whipplei (strain TW08/27) (Whipple's bacillus).